A 272-amino-acid chain; its full sequence is NH(3)-dependent NAD(+) synthetase (272 aa).

45 to 52 provides a ligand contact to ATP; sequence GISGGQDS. D51 is a binding site for Mg(2+). Residue R138 coordinates deamido-NAD(+). T158 serves as a coordination point for ATP. E163 contributes to the Mg(2+) binding site. The deamido-NAD(+) site is built by K171 and D178. Residues K187 and T209 each contribute to the ATP site. 258 to 259 contributes to the deamido-NAD(+) binding site; it reads HK.

Belongs to the NAD synthetase family. Homodimer.

The catalysed reaction is deamido-NAD(+) + NH4(+) + ATP = AMP + diphosphate + NAD(+) + H(+). Its pathway is cofactor biosynthesis; NAD(+) biosynthesis; NAD(+) from deamido-NAD(+) (ammonia route): step 1/1. Functionally, catalyzes the ATP-dependent amidation of deamido-NAD to form NAD. Uses ammonia as a nitrogen source. The chain is NH(3)-dependent NAD(+) synthetase from Bacillus velezensis (strain DSM 23117 / BGSC 10A6 / LMG 26770 / FZB42) (Bacillus amyloliquefaciens subsp. plantarum).